A 305-amino-acid chain; its full sequence is Divergent heme oxygenase-like protein (305 aa).

The N-terminal stretch at 1-18 is a signal peptide; it reads MIRKIIILMFTFFSNIHN. The segment at 1–83 is sufficient for apicoplast targeting; sequence MIRKIIILMF…GVDKNNINYN (83 aa). N-linked (GlcNAc...) asparagine glycosylation is found at Asn132, Asn159, and Asn288.

Proteolytically cleaved; targeted by its N-terminal leader sequence for import into the apicoplast where it undergoes proteolytic processing, resulting in an N-terminus starting at or near Gly-33 in the mature protein.

It localises to the plastid. Its subcellular location is the apicoplast. Its function is as follows. Essential for blood-stage parasite viability. Required for apicoplast biogenesis. Associates with the apicoplast genome and mediates apicoplast gene expression. Can bind heme. Can bind protoporphyrin IX. The chain is Divergent heme oxygenase-like protein from Plasmodium falciparum (isolate 3D7).